The primary structure comprises 371 residues: Cytochrome b (371 aa).

4 consecutive transmembrane segments (helical) span residues 25–45, 69–90, 105–125, and 170–190; these read FGSM…FLAV, WMMQ…YIHI, WMSG…GYVL, and FFAL…LHII. 2 residues coordinate heme b: His75 and His89. The heme b site is built by His174 and His188. His193 lines the a ubiquinone pocket. The next 4 helical transmembrane spans lie at 218–238, 280–300, 312–332, and 339–358; these read YKDL…VSFF, LGGA…PFMH, LSQL…WAAT, and YIMI…LSIP.

It belongs to the cytochrome b family. The cytochrome bc1 complex contains 3 respiratory subunits (MT-CYB, CYC1 and UQCRFS1), 2 core proteins (UQCRC1 and UQCRC2) and probably 6 low-molecular weight proteins. It depends on heme b as a cofactor.

Its subcellular location is the mitochondrion inner membrane. Component of the ubiquinol-cytochrome c reductase complex (complex III or cytochrome b-c1 complex) that is part of the mitochondrial respiratory chain. The b-c1 complex mediates electron transfer from ubiquinol to cytochrome c. Contributes to the generation of a proton gradient across the mitochondrial membrane that is then used for ATP synthesis. The chain is Cytochrome b (MT-CYB) from Simalia amethistina (Amethystine python).